A 321-amino-acid chain; its full sequence is Beta-ketoacyl-[acyl-carrier-protein] synthase III (321 aa).

Active-site residues include cysteine 115 and histidine 248. The tract at residues 249–253 (QANIR) is ACP-binding. Residue asparagine 278 is part of the active site.

Belongs to the thiolase-like superfamily. FabH family. As to quaternary structure, homodimer.

It is found in the cytoplasm. The enzyme catalyses malonyl-[ACP] + acetyl-CoA + H(+) = 3-oxobutanoyl-[ACP] + CO2 + CoA. Its pathway is lipid metabolism; fatty acid biosynthesis. Catalyzes the condensation reaction of fatty acid synthesis by the addition to an acyl acceptor of two carbons from malonyl-ACP. Catalyzes the first condensation reaction which initiates fatty acid synthesis and may therefore play a role in governing the total rate of fatty acid production. Possesses both acetoacetyl-ACP synthase and acetyl transacylase activities. Its substrate specificity determines the biosynthesis of branched-chain and/or straight-chain of fatty acids. The sequence is that of Beta-ketoacyl-[acyl-carrier-protein] synthase III from Azoarcus sp. (strain BH72).